The chain runs to 334 residues: Holliday junction branch migration complex subunit RuvB (334 aa).

The tract at residues 4 to 184 (ADRLIQPQIQ…FGIPLRLEFY (181 aa)) is large ATPase domain (RuvB-L). ATP contacts are provided by residues R24, G65, K68, T69, T70, 131–133 (EDY), R174, Y184, and R221. T69 provides a ligand contact to Mg(2+). A small ATPAse domain (RuvB-S) region spans residues 185-255 (NIKDLSTIVT…VAEHALDLLD (71 aa)). A head domain (RuvB-H) region spans residues 258–334 (SEGFDYMDRK…YQHFELIKPE (77 aa)). DNA is bound by residues R294, R313, and R318.

It belongs to the RuvB family. In terms of assembly, homohexamer. Forms an RuvA(8)-RuvB(12)-Holliday junction (HJ) complex. HJ DNA is sandwiched between 2 RuvA tetramers; dsDNA enters through RuvA and exits via RuvB. An RuvB hexamer assembles on each DNA strand where it exits the tetramer. Each RuvB hexamer is contacted by two RuvA subunits (via domain III) on 2 adjacent RuvB subunits; this complex drives branch migration. In the full resolvosome a probable DNA-RuvA(4)-RuvB(12)-RuvC(2) complex forms which resolves the HJ.

It is found in the cytoplasm. It carries out the reaction ATP + H2O = ADP + phosphate + H(+). Functionally, the RuvA-RuvB-RuvC complex processes Holliday junction (HJ) DNA during genetic recombination and DNA repair, while the RuvA-RuvB complex plays an important role in the rescue of blocked DNA replication forks via replication fork reversal (RFR). RuvA specifically binds to HJ cruciform DNA, conferring on it an open structure. The RuvB hexamer acts as an ATP-dependent pump, pulling dsDNA into and through the RuvAB complex. RuvB forms 2 homohexamers on either side of HJ DNA bound by 1 or 2 RuvA tetramers; 4 subunits per hexamer contact DNA at a time. Coordinated motions by a converter formed by DNA-disengaged RuvB subunits stimulates ATP hydrolysis and nucleotide exchange. Immobilization of the converter enables RuvB to convert the ATP-contained energy into a lever motion, pulling 2 nucleotides of DNA out of the RuvA tetramer per ATP hydrolyzed, thus driving DNA branch migration. The RuvB motors rotate together with the DNA substrate, which together with the progressing nucleotide cycle form the mechanistic basis for DNA recombination by continuous HJ branch migration. Branch migration allows RuvC to scan DNA until it finds its consensus sequence, where it cleaves and resolves cruciform DNA. This is Holliday junction branch migration complex subunit RuvB from Shewanella baltica (strain OS223).